The following is a 394-amino-acid chain: Elongation factor Tu 1 (394 aa).

Positions 10-204 (KPHVNVGTIG…YLDSYIPEPE (195 aa)) constitute a tr-type G domain. Residues 19–26 (GHVDHGKT) are G1. GTP is bound at residue 19-26 (GHVDHGKT). Mg(2+) is bound at residue T26. Residues 60–64 (GITIN) form a G2 region. Residues 81–84 (DCPG) form a G3 region. GTP contacts are provided by residues 81–85 (DCPGH) and 136–139 (NKCD). A G4 region spans residues 136–139 (NKCD). The segment at 174 to 176 (SAL) is G5.

The protein belongs to the TRAFAC class translation factor GTPase superfamily. Classic translation factor GTPase family. EF-Tu/EF-1A subfamily. As to quaternary structure, monomer.

The protein resides in the cytoplasm. The enzyme catalyses GTP + H2O = GDP + phosphate + H(+). GTP hydrolase that promotes the GTP-dependent binding of aminoacyl-tRNA to the A-site of ribosomes during protein biosynthesis. In Serratia proteamaculans (strain 568), this protein is Elongation factor Tu 1.